The primary structure comprises 371 residues: Beta-1,3-galactosyltransferase 4 (371 aa).

Over 1–4 (MPLS) the chain is Cytoplasmic. Residues 5-25 (LFRRVLLAVLLLVIIWTLFGP) form a helical; Signal-anchor for type II membrane protein membrane-spanning segment. At 26-371 (SGLGEELLSL…RCRFIAWFSS (346 aa)) the chain is on the lumenal side. Asn-143 carries N-linked (GlcNAc...) asparagine glycosylation.

The protein belongs to the glycosyltransferase 31 family. In terms of tissue distribution, expressed in heart, brain, spleen, kidney, lung and testis.

It localises to the golgi apparatus membrane. The enzyme catalyses a ganglioside GM2 (d18:1(4E)) + UDP-alpha-D-galactose = a ganglioside GM1 (d18:1(4E)) + UDP + H(+). It carries out the reaction a ganglioside GM2 + UDP-alpha-D-galactose = a ganglioside GM1 + UDP + H(+). It catalyses the reaction a ganglioside GD2 (d18:1(4E)) + UDP-alpha-D-galactose = a ganglioside GD1b (d18:1(4E)) + UDP + H(+). The catalysed reaction is a ganglioside GA2 (d18:1(4E)) + UDP-alpha-D-galactose = a ganglioside GA1 (d18:1(4E)) + UDP + H(+). The protein operates within protein modification; protein glycosylation. Involved in GM1/GD1B/GA1 ganglioside biosynthesis. The chain is Beta-1,3-galactosyltransferase 4 from Mus musculus (Mouse).